The primary structure comprises 120 residues: Protein FAM241B (120 aa).

Residues 12-59 (QDDDPRVRTTTQHRSSSSQQGFFNRGHGAPPGGPGPRQQQAGARLGAA) are disordered. 2 stretches are compositionally biased toward low complexity: residues 19–39 (RTTT…RGHG) and 47–59 (PRQQ…LGAA). Phosphoserine is present on S61. A helical transmembrane segment spans residues 91 to 111 (ILLLFLLMMLGVRGLLLVGLV).

This sequence belongs to the FAM241 family.

Its subcellular location is the membrane. Functionally, may play a role in lysosome homeostasis. The polypeptide is Protein FAM241B (Mus musculus (Mouse)).